The chain runs to 75 residues: Sec-independent protein translocase protein TatA (75 aa).

A helical membrane pass occupies residues Met-1 to Gly-21. The segment at Lys-40–Arg-75 is disordered.

Belongs to the TatA/E family. The Tat system comprises two distinct complexes: a TatABC complex, containing multiple copies of TatA, TatB and TatC subunits, and a separate TatA complex, containing only TatA subunits. Substrates initially bind to the TatABC complex, which probably triggers association of the separate TatA complex to form the active translocon.

The protein resides in the cell inner membrane. Functionally, part of the twin-arginine translocation (Tat) system that transports large folded proteins containing a characteristic twin-arginine motif in their signal peptide across membranes. TatA could form the protein-conducting channel of the Tat system. In Stenotrophomonas maltophilia (strain R551-3), this protein is Sec-independent protein translocase protein TatA.